The following is a 369-amino-acid chain: UDP-N-acetylglucosamine--N-acetylmuramyl-(pentapeptide) pyrophosphoryl-undecaprenol N-acetylglucosamine transferase (369 aa).

Residues 10-12, N124, S195, I252, and Q297 contribute to the UDP-N-acetyl-alpha-D-glucosamine site; that span reads TGG.

It belongs to the glycosyltransferase 28 family. MurG subfamily.

Its subcellular location is the cell membrane. It carries out the reaction Mur2Ac(oyl-L-Ala-gamma-D-Glu-L-Lys-D-Ala-D-Ala)-di-trans,octa-cis-undecaprenyl diphosphate + UDP-N-acetyl-alpha-D-glucosamine = beta-D-GlcNAc-(1-&gt;4)-Mur2Ac(oyl-L-Ala-gamma-D-Glu-L-Lys-D-Ala-D-Ala)-di-trans,octa-cis-undecaprenyl diphosphate + UDP + H(+). It participates in cell wall biogenesis; peptidoglycan biosynthesis. Its function is as follows. Cell wall formation. Catalyzes the transfer of a GlcNAc subunit on undecaprenyl-pyrophosphoryl-MurNAc-pentapeptide (lipid intermediate I) to form undecaprenyl-pyrophosphoryl-MurNAc-(pentapeptide)GlcNAc (lipid intermediate II). The sequence is that of UDP-N-acetylglucosamine--N-acetylmuramyl-(pentapeptide) pyrophosphoryl-undecaprenol N-acetylglucosamine transferase from Leuconostoc citreum (strain KM20).